Here is a 241-residue protein sequence, read N- to C-terminus: Glucosamine-6-phosphate deaminase (241 aa).

Asp-67 serves as the catalytic Proton acceptor; for enolization step. Residue Asn-136 is the For ring-opening step of the active site. Catalysis depends on His-138, which acts as the Proton acceptor; for ring-opening step. Glu-143 (for ring-opening step) is an active-site residue.

This sequence belongs to the glucosamine/galactosamine-6-phosphate isomerase family. NagB subfamily.

It catalyses the reaction alpha-D-glucosamine 6-phosphate + H2O = beta-D-fructose 6-phosphate + NH4(+). It functions in the pathway amino-sugar metabolism; N-acetylneuraminate degradation; D-fructose 6-phosphate from N-acetylneuraminate: step 5/5. Catalyzes the reversible isomerization-deamination of glucosamine 6-phosphate (GlcN6P) to form fructose 6-phosphate (Fru6P) and ammonium ion. The polypeptide is Glucosamine-6-phosphate deaminase (Bacillus velezensis (strain DSM 23117 / BGSC 10A6 / LMG 26770 / FZB42) (Bacillus amyloliquefaciens subsp. plantarum)).